The chain runs to 124 residues: Small ribosomal subunit protein uS12 (124 aa).

A 3-methylthioaspartic acid modification is found at aspartate 89. The disordered stretch occupies residues 105–124; sequence AGVKDRKKGRSKYGAKRPKA. Basic residues predominate over residues 109–124; it reads DRKKGRSKYGAKRPKA.

The protein belongs to the universal ribosomal protein uS12 family. Part of the 30S ribosomal subunit. Contacts proteins S8 and S17. May interact with IF1 in the 30S initiation complex.

Its function is as follows. With S4 and S5 plays an important role in translational accuracy. In terms of biological role, interacts with and stabilizes bases of the 16S rRNA that are involved in tRNA selection in the A site and with the mRNA backbone. Located at the interface of the 30S and 50S subunits, it traverses the body of the 30S subunit contacting proteins on the other side and probably holding the rRNA structure together. The combined cluster of proteins S8, S12 and S17 appears to hold together the shoulder and platform of the 30S subunit. The protein is Small ribosomal subunit protein uS12 of Dichelobacter nodosus (strain VCS1703A).